We begin with the raw amino-acid sequence, 333 residues long: Eukaryotic translation initiation factor 2 subunit 2 (333 aa).

2 disordered regions span residues 1-120 and 139-165; these read MSGD…LDIM and ILEKDEALEDEDSKKDDGISFSNQTGP. N-acetylserine is present on Ser-2. Ser-2 carries the phosphoserine modification. A Phosphoserine; by PKC; in vitro modification is found at Ser-13. A compositionally biased stretch (basic residues) spans 13-22; the sequence is SKKKKKKKKP. Residue Thr-36 is modified to Phosphothreonine. The segment covering 40–51 has biased composition (basic and acidic residues); it reads ETKEVEPEPTED. Ser-67 is subject to Phosphoserine; by CK2. Positions 96-105 are enriched in basic and acidic residues; it reads EGVKDLKIEN. A Glycyl lysine isopeptide (Lys-Gly) (interchain with G-Cter in SUMO2) cross-link involves residue Lys-102. 2 stretches are compositionally biased toward acidic residues: residues 106 to 118 and 139 to 149; these read DVQEPAEPEDDLD and ILEKDEALEDE. Ser-158 bears the Phosphoserine mark. Ser-218 carries the post-translational modification Phosphoserine; by PKA; in vitro. An N6-acetyllysine mark is found at Lys-265 and Lys-293. The C4-type zinc finger occupies 281-305; it reads CHTCRSPDTILQKDTRLYFLQCETC.

The protein belongs to the eIF-2-beta/eIF-5 family. In terms of assembly, eukaryotic translation initiation factor 2 eIF2 is a heterotrimeric complex composed of an alpha (EIF2S1), a beta (EIF2S2) and a gamma (EIF2S3) chain. eIF2 is member of the 43S pre-initiation complex (43S PIC). eIF2 forms a complex with at least CELF1/CUGBP1, CALR, CALR3, EIF2S1, EIF2S2, HSP90B1 and HSPA5. Interacts with BZW2/5MP1. Interacts with EIF5. Post-translationally, the N-terminus is blocked.

The protein resides in the cytoplasm. The protein localises to the cytosol. In terms of biological role, component of the eIF2 complex that functions in the early steps of protein synthesis by forming a ternary complex with GTP and initiator tRNA. This complex binds to a 40S ribosomal subunit, followed by mRNA binding to form the 43S pre-initiation complex (43S PIC). Junction of the 60S ribosomal subunit to form the 80S initiation complex is preceded by hydrolysis of the GTP bound to eIF2 and release of an eIF2-GDP binary complex. In order for eIF2 to recycle and catalyze another round of initiation, the GDP bound to eIF2 must exchange with GTP by way of a reaction catalyzed by eIF2B. This chain is Eukaryotic translation initiation factor 2 subunit 2 (EIF2S2), found in Oryctolagus cuniculus (Rabbit).